A 320-amino-acid chain; its full sequence is Ferrochelatase (320 aa).

H194 and E275 together coordinate Fe cation.

This sequence belongs to the ferrochelatase family. Monomer.

Its subcellular location is the cytoplasm. It carries out the reaction heme b + 2 H(+) = protoporphyrin IX + Fe(2+). It functions in the pathway porphyrin-containing compound metabolism; protoheme biosynthesis; protoheme from protoporphyrin-IX: step 1/1. Catalyzes the ferrous insertion into protoporphyrin IX. This Shigella flexneri serotype 5b (strain 8401) protein is Ferrochelatase.